The following is a 451-amino-acid chain: Secreted RxLR effector protein 111 (451 aa).

A signal peptide spans 1–19; that stretch reads MRGTLATALLLVASCRIAA. The RxLR-dEER motif lies at 48–69; the sequence is RFLRDNREQRVALALTAANESR. N66 carries N-linked (GlcNAc...) asparagine glycosylation. 2 stretches are compositionally biased toward polar residues: residues 175 to 184 and 413 to 426; these read RKTLSKTQFK and SPAS…QRTG. Disordered regions lie at residues 175–194 and 404–451; these read RKTL…STKR and IPLQ…NKHA. Over residues 437 to 451 the composition is skewed to basic and acidic residues; the sequence is PERDSFRHIESNKHA.

This sequence belongs to the RxLR effector family.

It localises to the secreted. The protein localises to the host nucleus. Functionally, secreted effector that acts as an elicitor that induces cell death in host plant cells. The protein is Secreted RxLR effector protein 111 of Plasmopara viticola (Downy mildew of grapevine).